We begin with the raw amino-acid sequence, 389 residues long: Large ribosomal subunit protein uL3 (389 aa).

It belongs to the universal ribosomal protein uL3 family. Component of the large ribosomal subunit. Mature ribosomes consist of a small (40S) and a large (60S) subunit. The 40S subunit contains about 32 different proteins and 1 molecule of RNA (18S). The 60S subunit contains 45 different proteins and 3 molecules of RNA (25S, 5.8S and 5S).

It is found in the cytoplasm. Component of the ribosome, a large ribonucleoprotein complex responsible for the synthesis of proteins in the cell. The small ribosomal subunit (SSU) binds messenger RNAs (mRNAs) and translates the encoded message by selecting cognate aminoacyl-transfer RNA (tRNA) molecules. The large subunit (LSU) contains the ribosomal catalytic site termed the peptidyl transferase center (PTC), which catalyzes the formation of peptide bonds, thereby polymerizing the amino acids delivered by tRNAs into a polypeptide chain. The nascent polypeptides leave the ribosome through a tunnel in the LSU and interact with protein factors that function in enzymatic processing, targeting, and the membrane insertion of nascent chains at the exit of the ribosomal tunnel. RPL3 plays a role in coordinating processes of accommodating the aminoacyl-tRNA in the PTC. The protein is Large ribosomal subunit protein uL3 of Candida albicans (strain SC5314 / ATCC MYA-2876) (Yeast).